We begin with the raw amino-acid sequence, 632 residues long: Phosphomethylpyrimidine synthase (632 aa).

Substrate contacts are provided by residues Asn-237, Met-266, Tyr-295, His-331, 351 to 353, 392 to 395, and Glu-431; these read SRG and DGLR. Zn(2+) is bound at residue His-435. Residue Tyr-458 coordinates substrate. His-499 lines the Zn(2+) pocket. Cys-579, Cys-582, and Cys-587 together coordinate [4Fe-4S] cluster.

It belongs to the ThiC family. Homodimer. [4Fe-4S] cluster is required as a cofactor.

The catalysed reaction is 5-amino-1-(5-phospho-beta-D-ribosyl)imidazole + S-adenosyl-L-methionine = 4-amino-2-methyl-5-(phosphooxymethyl)pyrimidine + CO + 5'-deoxyadenosine + formate + L-methionine + 3 H(+). It participates in cofactor biosynthesis; thiamine diphosphate biosynthesis. Catalyzes the synthesis of the hydroxymethylpyrimidine phosphate (HMP-P) moiety of thiamine from aminoimidazole ribotide (AIR) in a radical S-adenosyl-L-methionine (SAM)-dependent reaction. The protein is Phosphomethylpyrimidine synthase of Nitrosomonas eutropha (strain DSM 101675 / C91 / Nm57).